The chain runs to 446 residues: MLLRYLFILFIIIPIKAFALIEVDITRGNLNPLPVAVSPLSIDNKSKENFKKILKQEDLGSEISIVVENNLRQSGLFNPLDKNAFLQEPDVANLKPRFEDWNLIKAQALVTGKVTFVDEKLRVEFRLWDVLAGKEMMALAFTTVPSNWRRVGHIITDKVYERLTGEKGYFDTRIIYVSEEGPKTKRIKKLAIMDQDGFNNKYLTLGNELVLTPRFSPTNQMVTYLSYFRNLPRVYLLDIETGMQEVVGDFPGMTFAPRFSPDGKKIIMSFAKDGNSDIYTMDLENRIVERITNHPSIDTSPSYSPDGKKITFNSDRSGYQQIYVMDSNGKNVKRISFGNGLYGTPVWSPRGDLIAFTKLHKGKFYIGVMRTDGTGERLLTENFYQEAPSWSPNGRVLIFYRETKTNSKGEGFSAKLWSIDLTGYNEKMVETETDASDPSWSSLLSN.

The N-terminal stretch at 1 to 19 (MLLRYLFILFIIIPIKAFA) is a signal peptide.

Belongs to the TolB family. The Tol-Pal system is composed of five core proteins: the inner membrane proteins TolA, TolQ and TolR, the periplasmic protein TolB and the outer membrane protein Pal. They form a network linking the inner and outer membranes and the peptidoglycan layer.

The protein localises to the periplasm. Functionally, part of the Tol-Pal system, which plays a role in outer membrane invagination during cell division and is important for maintaining outer membrane integrity. The polypeptide is Tol-Pal system protein TolB (Pelagibacter ubique (strain HTCC1062)).